We begin with the raw amino-acid sequence, 72 residues long: Alpha-mammal toxin Bot3 (72 aa).

The signal sequence occupies residues 1-8 (LVMAGVES). Positions 10 to 72 (KDGYIVDDRN…VRTKGPGRCN (63 aa)) constitute an LCN-type CS-alpha/beta domain. Cystine bridges form between Cys20–Cys71, Cys24–Cys44, Cys30–Cys54, and Cys34–Cys56. Asn72 bears the Asparagine amide mark.

This sequence belongs to the long (4 C-C) scorpion toxin superfamily. Sodium channel inhibitor family. Alpha subfamily. When the toxin is not amidated, there are 75% loss of toxicity to mice, and total incapacity to bind rat brain synaptosomes. In terms of tissue distribution, expressed by the venom gland.

Its subcellular location is the secreted. Alpha toxins bind voltage-independently at site-3 of sodium channels (Nav) and inhibit the inactivation of the activated channels, thereby blocking neuronal transmission. Is active against mammals and binds with high affinity to rat brain synaptosomes. The chain is Alpha-mammal toxin Bot3 from Buthus occitanus tunetanus (Common European scorpion).